Consider the following 132-residue polypeptide: Nitrogenase iron-iron protein delta chain (132 aa).

Hexamer of two alpha, two beta, and two delta chains. Requires iron-sulfur cluster as cofactor.

It carries out the reaction N2 + 8 reduced [2Fe-2S]-[ferredoxin] + 16 ATP + 16 H2O = H2 + 8 oxidized [2Fe-2S]-[ferredoxin] + 2 NH4(+) + 16 ADP + 16 phosphate + 6 H(+). The key enzymatic reactions in nitrogen fixation are catalyzed by the nitrogenase complex, which has 2 components: the iron protein (component 2) and a component 1 which is either a molybdenum-iron protein, a vanadium-iron, or an iron-iron protein. The polypeptide is Nitrogenase iron-iron protein delta chain (anfG) (Ruminiclostridium hungatei (Clostridium hungatei)).